Reading from the N-terminus, the 166-residue chain is Large ribosomal subunit protein uL11 (166 aa).

Belongs to the universal ribosomal protein uL11 family. In terms of assembly, part of the ribosomal stalk of the 50S ribosomal subunit. Interacts with L10 and the large rRNA to form the base of the stalk. L10 forms an elongated spine to which L12 dimers bind in a sequential fashion forming a multimeric L10(L12)X complex.

In terms of biological role, forms part of the ribosomal stalk which helps the ribosome interact with GTP-bound translation factors. The polypeptide is Large ribosomal subunit protein uL11 (Methanopyrus kandleri (strain AV19 / DSM 6324 / JCM 9639 / NBRC 100938)).